The following is a 279-amino-acid chain: MLTDGSYFHLHLVSDSTGETLITVSRAVAAQYANVNAVEHVYPLVRSQKQLDRVLQEIEESPGIVLFTLLEGELVARLEAKCQEINSPSLSIIGPVMQLFEAYLGASTTGRVGAQHTLNAEYFKRIDALNYSMMHDDGQHVEGLEEADVVLVGVSRTSKTPTSIYLANRGIRTANVPLVAGIPIPHQLETLKKPLVVSLHASPERLIQVRQNRLLSLGAGAGNDSYIDRQSVTDEVLLARKLSAKYGWSLLDVTRRSIEETAAAIMKLLADRQRQRMSE.

An ADP-binding site is contributed by 153-160 (GVSRTSKT).

The protein belongs to the pyruvate, phosphate/water dikinase regulatory protein family. PDRP subfamily.

It carries out the reaction N(tele)-phospho-L-histidyl/L-threonyl-[pyruvate, phosphate dikinase] + ADP = N(tele)-phospho-L-histidyl/O-phospho-L-threonyl-[pyruvate, phosphate dikinase] + AMP + H(+). It catalyses the reaction N(tele)-phospho-L-histidyl/O-phospho-L-threonyl-[pyruvate, phosphate dikinase] + phosphate + H(+) = N(tele)-phospho-L-histidyl/L-threonyl-[pyruvate, phosphate dikinase] + diphosphate. Functionally, bifunctional serine/threonine kinase and phosphorylase involved in the regulation of the pyruvate, phosphate dikinase (PPDK) by catalyzing its phosphorylation/dephosphorylation. The chain is Putative pyruvate, phosphate dikinase regulatory protein from Rhodopseudomonas palustris (strain HaA2).